A 112-amino-acid chain; its full sequence is uncharacterized protein (112 aa).

The next 2 helical transmembrane spans lie at 7–26 (PSFHFFIFFFLFCLLRTLDY) and 36–58 (TYMHIKLFFSYYFRFVHLFFFLY).

It localises to the membrane. This is an uncharacterized protein from Saccharomyces cerevisiae (strain ATCC 204508 / S288c) (Baker's yeast).